Reading from the N-terminus, the 299-residue chain is Lathosterol oxidase (299 aa).

Transmembrane regions (helical) follow at residues 32–52 (VSLL…CATL), 79–99 (FTVK…LLEL), and 117–137 (IHLI…IYWI). The Fatty acid hydroxylase domain maps to 124–252 (ISFLFFTDML…YFTLWDRIGG (129 aa)). A Histidine box-1 motif is present at residues 138–143 (HRGLHH). The Histidine box-2 signature appears at 151–155 (HKPHH). The short motif at 228–233 (HHTDHH) is the Histidine box-3 element. Ser-253 bears the Phosphoserine mark.

The protein belongs to the sterol desaturase family. It depends on Fe cation as a cofactor.

The protein resides in the endoplasmic reticulum membrane. It carries out the reaction a Delta(7)-sterol + 2 Fe(II)-[cytochrome b5] + O2 + 2 H(+) = a Delta(5),Delta(7)-sterol + 2 Fe(III)-[cytochrome b5] + 2 H2O. The enzyme catalyses lathosterol + 2 Fe(II)-[cytochrome b5] + O2 + 2 H(+) = 7-dehydrocholesterol + 2 Fe(III)-[cytochrome b5] + 2 H2O. The catalysed reaction is 5alpha-cholesta-7,24-dien-3beta-ol + 2 Fe(II)-[cytochrome b5] + O2 + 2 H(+) = 7-dehydrodesmosterol + 2 Fe(III)-[cytochrome b5] + 2 H2O. Its pathway is steroid biosynthesis; cholesterol biosynthesis. Its function is as follows. Catalyzes the penultimate step of the biosynthesis of cholesterol, the dehydrogenation of lathosterol into 7-dehydrocholesterol (7-DHC). Cholesterol is the major sterol component in mammalian membranes and a precursor for bile acid and steroid hormone synthesis. In addition to its essential role in cholesterol biosynthesis, it also indirectly regulates ferroptosis through the production of 7-DHC. By diverting the spread of damage caused by peroxyl radicals from the phospholipid components to its sterol nucleus, 7-DHC prevents this form of cell death. This Rattus norvegicus (Rat) protein is Lathosterol oxidase.